Reading from the N-terminus, the 34-residue chain is MQVNDLGFIATILFVLVPTVFLLILYIQTNKTAS.

Residues 7-27 traverse the membrane as a helical segment; it reads GFIATILFVLVPTVFLLILYI.

It belongs to the PsbM family. In terms of assembly, PSII is composed of 1 copy each of membrane proteins PsbA, PsbB, PsbC, PsbD, PsbE, PsbF, PsbH, PsbI, PsbJ, PsbK, PsbL, PsbM, PsbT, PsbX, PsbY, PsbZ, Psb30/Ycf12, peripheral proteins PsbO, CyanoQ (PsbQ), PsbU, PsbV and a large number of cofactors. It forms dimeric complexes.

The protein localises to the cellular thylakoid membrane. Its function is as follows. One of the components of the core complex of photosystem II (PSII). PSII is a light-driven water:plastoquinone oxidoreductase that uses light energy to abstract electrons from H(2)O, generating O(2) and a proton gradient subsequently used for ATP formation. It consists of a core antenna complex that captures photons, and an electron transfer chain that converts photonic excitation into a charge separation. This subunit is found at the monomer-monomer interface. The sequence is that of Photosystem II reaction center protein M from Picosynechococcus sp. (strain ATCC 27264 / PCC 7002 / PR-6) (Agmenellum quadruplicatum).